Here is a 470-residue protein sequence, read N- to C-terminus: ATP synthase subunit beta (470 aa).

156–163 (GGAGVGKT) contributes to the ATP binding site.

Belongs to the ATPase alpha/beta chains family. As to quaternary structure, F-type ATPases have 2 components, CF(1) - the catalytic core - and CF(0) - the membrane proton channel. CF(1) has five subunits: alpha(3), beta(3), gamma(1), delta(1), epsilon(1). CF(0) has three main subunits: a(1), b(2) and c(9-12). The alpha and beta chains form an alternating ring which encloses part of the gamma chain. CF(1) is attached to CF(0) by a central stalk formed by the gamma and epsilon chains, while a peripheral stalk is formed by the delta and b chains.

The protein resides in the cell inner membrane. The enzyme catalyses ATP + H2O + 4 H(+)(in) = ADP + phosphate + 5 H(+)(out). Functionally, produces ATP from ADP in the presence of a proton gradient across the membrane. The catalytic sites are hosted primarily by the beta subunits. The sequence is that of ATP synthase subunit beta from Nitratidesulfovibrio vulgaris (strain ATCC 29579 / DSM 644 / CCUG 34227 / NCIMB 8303 / VKM B-1760 / Hildenborough) (Desulfovibrio vulgaris).